Reading from the N-terminus, the 357-residue chain is Protein BUR2 (357 aa).

As to quaternary structure, belongs to the BUR kinase complex.

The protein localises to the nucleus. Component of the BUR kinase complex involved in transcription regulation. This complex phosphorylates the UBC2/RAD6 ubiquitin-conjugating enzyme (E2), leading to monoubiquitination of histone H2B and the silencing of telomeric-associated genes. Also required for histone H3 methylation. Necessary for the recovery from pheromone-induced growth arrest in the cell cycle G1 phase. The kinase activity of the complex requires the presence of BUR2. Overexpression of BUR2 interferes with mitotic chromosome segregation. The chain is Protein BUR2 (BUR2) from Candida glabrata (strain ATCC 2001 / BCRC 20586 / JCM 3761 / NBRC 0622 / NRRL Y-65 / CBS 138) (Yeast).